Consider the following 691-residue polypeptide: Elongation factor G (691 aa).

Positions 8-282 (ERVRNIGIAA…AVIDYLPAPV (275 aa)) constitute a tr-type G domain. GTP contacts are provided by residues 17 to 24 (AHIDAGKT), 81 to 85 (DTPGH), and 135 to 138 (NKMD).

Belongs to the TRAFAC class translation factor GTPase superfamily. Classic translation factor GTPase family. EF-G/EF-2 subfamily.

It localises to the cytoplasm. Its function is as follows. Catalyzes the GTP-dependent ribosomal translocation step during translation elongation. During this step, the ribosome changes from the pre-translocational (PRE) to the post-translocational (POST) state as the newly formed A-site-bound peptidyl-tRNA and P-site-bound deacylated tRNA move to the P and E sites, respectively. Catalyzes the coordinated movement of the two tRNA molecules, the mRNA and conformational changes in the ribosome. This is Elongation factor G from Synechococcus sp. (strain CC9605).